The sequence spans 698 residues: SHC SH2 domain-binding protein 1 homolog B (698 aa).

3 PbH1 repeats span residues Cys480–Pro502, Gly503–Asp524, and Ile532–Lys554.

The protein localises to the midbody. The protein resides in the cytoplasm. It localises to the cytoskeleton. It is found in the spindle. Its function is as follows. May play a role in signaling pathways governing cellular proliferation. This is SHC SH2 domain-binding protein 1 homolog B (shcbp1-b) from Xenopus laevis (African clawed frog).